The primary structure comprises 376 residues: N-glycosylase/DNA lyase (376 aa).

Residues asparagine 134, arginine 139, and arginine 189 each coordinate DNA. Lysine 241 functions as the Schiff-base intermediate with DNA in the catalytic mechanism. Residues proline 258 and aspartate 260 each contribute to the 8-oxoguanine site. Histidine 262 contributes to the DNA binding site. Glutamine 320 and phenylalanine 324 together coordinate 8-oxoguanine.

This sequence belongs to the type-1 OGG1 family.

The protein localises to the nucleus. It catalyses the reaction 2'-deoxyribonucleotide-(2'-deoxyribose 5'-phosphate)-2'-deoxyribonucleotide-DNA = a 3'-end 2'-deoxyribonucleotide-(2,3-dehydro-2,3-deoxyribose 5'-phosphate)-DNA + a 5'-end 5'-phospho-2'-deoxyribonucleoside-DNA + H(+). Functionally, DNA repair enzyme that incises DNA at 8-oxoG residues. Excises 7,8-dihydro-8-oxoguanine and 2,6-diamino-4-hydroxy-5-N-methylformamidopyrimidine (FAPY) from damaged DNA. Has a beta-lyase activity that nicks DNA 3' to the lesion. The protein is N-glycosylase/DNA lyase (OGG1) of Saccharomyces cerevisiae (strain ATCC 204508 / S288c) (Baker's yeast).